The chain runs to 236 residues: Alpha-tubulin N-acetyltransferase (236 aa).

The N-acetyltransferase domain maps to 21-201 (ASVPDGVSRW…NKFVVFHGFF (181 aa)). Acetyl-CoA-binding positions include 134-147 (FYVD…GYGK) and 171-180 (SDKLLGFMKK). A disordered region spans residues 217-236 (SPTGAAAAATGTKAKNEMPG). Positions 219–229 (TGAAAAATGTK) are enriched in low complexity.

It belongs to the acetyltransferase ATAT1 family.

The enzyme catalyses L-lysyl-[alpha-tubulin] + acetyl-CoA = N(6)-acetyl-L-lysyl-[alpha-tubulin] + CoA + H(+). Its function is as follows. Specifically acetylates 'Lys-40' in alpha-tubulin on the lumenal side of microtubules. Promotes microtubule destabilization and accelerates microtubule dynamics; this activity may be independent of acetylation activity. Acetylates alpha-tubulin with a slow enzymatic rate, due to a catalytic site that is not optimized for acetyl transfer. Enters the microtubule through each end and diffuses quickly throughout the lumen of microtubules. Acetylates only long/old microtubules because of its slow acetylation rate since it does not have time to act on dynamically unstable microtubules before the enzyme is released. This chain is Alpha-tubulin N-acetyltransferase, found in Leishmania braziliensis.